Reading from the N-terminus, the 356-residue chain is S-adenosylmethionine:tRNA ribosyltransferase-isomerase (356 aa).

Belongs to the QueA family. Monomer.

Its subcellular location is the cytoplasm. The catalysed reaction is 7-aminomethyl-7-carbaguanosine(34) in tRNA + S-adenosyl-L-methionine = epoxyqueuosine(34) in tRNA + adenine + L-methionine + 2 H(+). The protein operates within tRNA modification; tRNA-queuosine biosynthesis. Transfers and isomerizes the ribose moiety from AdoMet to the 7-aminomethyl group of 7-deazaguanine (preQ1-tRNA) to give epoxyqueuosine (oQ-tRNA). This chain is S-adenosylmethionine:tRNA ribosyltransferase-isomerase, found in Xanthomonas axonopodis pv. citri (strain 306).